The chain runs to 336 residues: Phospho-N-acetylmuramoyl-pentapeptide-transferase (336 aa).

Transmembrane regions (helical) follow at residues 3-23 (LTLI…PYFI), 53-73 (GGTV…LFSI), 78-98 (SLAL…IGFL), 118-138 (LALQ…PSGI), 143-163 (VFGY…FWVV), 174-194 (GIDG…GVIA), 200-220 (FDVL…FCFN), 226-246 (VFMG…ISIA), 251-271 (WTLL…MLQV), and 316-336 (AFLW…LYVF).

The protein belongs to the glycosyltransferase 4 family. MraY subfamily. Mg(2+) is required as a cofactor.

It localises to the cell membrane. It carries out the reaction UDP-N-acetyl-alpha-D-muramoyl-L-alanyl-gamma-D-glutamyl-L-lysyl-D-alanyl-D-alanine + di-trans,octa-cis-undecaprenyl phosphate = Mur2Ac(oyl-L-Ala-gamma-D-Glu-L-Lys-D-Ala-D-Ala)-di-trans,octa-cis-undecaprenyl diphosphate + UMP. The protein operates within cell wall biogenesis; peptidoglycan biosynthesis. Functionally, catalyzes the initial step of the lipid cycle reactions in the biosynthesis of the cell wall peptidoglycan: transfers peptidoglycan precursor phospho-MurNAc-pentapeptide from UDP-MurNAc-pentapeptide onto the lipid carrier undecaprenyl phosphate, yielding undecaprenyl-pyrophosphoryl-MurNAc-pentapeptide, known as lipid I. The chain is Phospho-N-acetylmuramoyl-pentapeptide-transferase from Streptococcus pyogenes serotype M1.